A 358-amino-acid chain; its full sequence is Probable RNA methyltransferase MXAN_6459 (358 aa).

E92 (proton acceptor) is an active-site residue. The region spanning 99–327 (FDEKYVICVS…PVARRYSGGK (229 aa)) is the Radical SAM core domain. The cysteines at positions 106 and 333 are disulfide-linked. C113, C117, and C120 together coordinate [4Fe-4S] cluster. Residues 160 to 161 (GE), S192, 215 to 217 (SVT), and D289 contribute to the S-adenosyl-L-methionine site. C333 functions as the S-methylcysteine intermediate in the catalytic mechanism.

Belongs to the radical SAM superfamily. RlmN family. Requires [4Fe-4S] cluster as cofactor.

The protein localises to the cytoplasm. The chain is Probable RNA methyltransferase MXAN_6459 from Myxococcus xanthus (strain DK1622).